Here is a 692-residue protein sequence, read N- to C-terminus: Structure-specific endonuclease subunit SLX4 (692 aa).

Positions 39–59 are disordered; the sequence is SDDEDQDEEQETEIPPEEGDD.

This sequence belongs to the SLX4 family. In terms of assembly, forms a heterodimer with SLX1. In terms of processing, phosphorylated in response to DNA damage.

Its subcellular location is the nucleus. Regulatory subunit of the SLX1-SLX4 structure-specific endonuclease that resolves DNA secondary structures generated during DNA repair and recombination. Has endonuclease activity towards branched DNA substrates, introducing single-strand cuts in duplex DNA close to junctions with ss-DNA. This is Structure-specific endonuclease subunit SLX4 from Kluyveromyces lactis (strain ATCC 8585 / CBS 2359 / DSM 70799 / NBRC 1267 / NRRL Y-1140 / WM37) (Yeast).